A 148-amino-acid chain; its full sequence is Large ribosomal subunit protein bL9 (148 aa).

This sequence belongs to the bacterial ribosomal protein bL9 family.

Functionally, binds to the 23S rRNA. This Pseudomonas putida (strain ATCC 700007 / DSM 6899 / JCM 31910 / BCRC 17059 / LMG 24140 / F1) protein is Large ribosomal subunit protein bL9.